The primary structure comprises 127 residues: Large-conductance mechanosensitive channel (127 aa).

3 helical membrane-spanning segments follow: residues glutamate 9–phenylalanine 29, isoleucine 32–valine 52, and valine 75–leucine 95.

This sequence belongs to the MscL family. As to quaternary structure, homopentamer.

It is found in the cell inner membrane. In terms of biological role, channel that opens in response to stretch forces in the membrane lipid bilayer. May participate in the regulation of osmotic pressure changes within the cell. The sequence is that of Large-conductance mechanosensitive channel from Legionella pneumophila (strain Lens).